The following is a 124-amino-acid chain: MATVNQLVRKPRAPKVDKTNVPALNACPQKRGVCTRVYTTTPKKPNSALRKVARVRLTNGFEVTSYIGGEGHNLQEHSVILIRGGRVKDLPGVRYHTVRGALDCAGVSERRQGRSKYGAKRPKS.

Position 89 is a 3-methylthioaspartic acid (aspartate 89).

This sequence belongs to the universal ribosomal protein uS12 family. As to quaternary structure, part of the 30S ribosomal subunit. Contacts proteins S8 and S17. May interact with IF1 in the 30S initiation complex.

Its function is as follows. With S4 and S5 plays an important role in translational accuracy. Functionally, interacts with and stabilizes bases of the 16S rRNA that are involved in tRNA selection in the A site and with the mRNA backbone. Located at the interface of the 30S and 50S subunits, it traverses the body of the 30S subunit contacting proteins on the other side and probably holding the rRNA structure together. The combined cluster of proteins S8, S12 and S17 appears to hold together the shoulder and platform of the 30S subunit. This is Small ribosomal subunit protein uS12 from Shewanella piezotolerans (strain WP3 / JCM 13877).